The sequence spans 103 residues: Histone H4 (103 aa).

Lys6 carries the post-translational modification N6-acetyl-N6-methyllysine; alternate. An N6-methyllysine; alternate mark is found at Lys6, Lys9, and Lys13. Position 13 is an N6-acetyl-N6-methyllysine; alternate (Lys13). A DNA-binding region spans residues Lys17–Lys21. Lys92 carries the post-translational modification N6-glutaryllysine.

The protein belongs to the histone H4 family. As to quaternary structure, the nucleosome is a histone octamer containing two molecules each of H2A, H2B, H3 and H4 assembled in one H3-H4 heterotetramer and two H2A-H2B heterodimers. The octamer wraps approximately 147 bp of DNA. Post-translationally, glutarylation at Lys-92 (H4K91glu) destabilizes nucleosomes by promoting dissociation of the H2A-H2B dimers from nucleosomes.

The protein localises to the nucleus. It is found in the chromosome. In terms of biological role, core component of nucleosome. Nucleosomes wrap and compact DNA into chromatin, limiting DNA accessibility to the cellular machineries which require DNA as a template. Histones thereby play a central role in transcription regulation, DNA repair, DNA replication and chromosomal stability. DNA accessibility is regulated via a complex set of post-translational modifications of histones, also called histone code, and nucleosome remodeling. The polypeptide is Histone H4 (ahsb4) (Blastobotrys adeninivorans (Yeast)).